Consider the following 211-residue polypeptide: Intermembrane phospholipid transport system binding protein MlaC (211 aa).

An N-terminal signal peptide occupies residues 1-21 (MFKRLMMVALLVIAPLSAATA).

It belongs to the MlaC/ttg2D family. Interacts with the MlaA-OmpF outer membrane complex and with the inner membrane ABC transporter complex MlaFEDB, via direct interaction with MlaD.

Its subcellular location is the periplasm. Functionally, involved in a phospholipid transport pathway that maintains lipid asymmetry in the outer membrane by retrograde trafficking of phospholipids from the outer membrane to the inner membrane. May transfer phospholipid across the periplasmic space and deliver it to the MlaFEDB complex at the inner membrane. The polypeptide is Intermembrane phospholipid transport system binding protein MlaC (Escherichia coli (strain K12)).